Here is a 405-residue protein sequence, read N- to C-terminus: Secreted aspartic protease 8 (405 aa).

The N-terminal stretch at 1–23 (MVSIITFTKNVLVTLAFALLAQG) is a signal peptide. Positions 24 to 75 (LAIPEDIDKRAEKVVSLDFTVTRKPFNATAHGQHHQSQQQQQQQQQQPAQKR) are cleaved as a propeptide — activation peptide. The tract at residues 52-78 (TAHGQHHQSQQQQQQQQQQPAQKRGTV) is disordered. The span at 58–70 (HQSQQQQQQQQQQ) shows a compositional bias: low complexity. The Peptidase A1 domain occupies 89–392 (YAATITVGSN…DLDGNTISLA (304 aa)). Residue Asp-107 is part of the active site. Residue 107-109 (DTG) coordinates pepstatin A. Cys-122 and Cys-134 are oxidised to a cystine. Pepstatin A contacts are provided by residues 160 to 161 (ED) and 292 to 296 (DSGTT). Asp-292 is an active-site residue. The cysteines at positions 327 and 358 are disulfide-linked.

This sequence belongs to the peptidase A1 family. In terms of assembly, monomer.

It is found in the secreted. The enzyme catalyses Preferential cleavage at the carboxyl of hydrophobic amino acids, but fails to cleave 15-Leu-|-Tyr-16, 16-Tyr-|-Leu-17 and 24-Phe-|-Phe-25 of insulin B chain. Activates trypsinogen, and degrades keratin.. Its function is as follows. Secreted aspartic peptidases (SAPs) are a group of ten acidic hydrolases considered as key virulence factors. These enzymes supply the fungus with nutrient amino acids as well as are able to degrade the selected host's proteins involved in the immune defense. Moreover, acts toward human hemoglobin though limited proteolysis to generate a variety of antimicrobial hemocidins, enabling to compete with the other microorganisms of the same physiological niche using the microbicidal peptides generated from the host protein. Functionally, plays a key role in defense against host by cleaving histatin-5 (Hst 5), a peptide from human saliva that carries out fungicidal activity. The cleavage rate decreases in an order of SAP2 &gt; SAP9 &gt; SAP3 &gt; SAP7 &gt; SAP4 &gt; SAP1 &gt; SAP8. The hydrolysis of Hst 5 by SAP8 causes production of the DSHAKRHHGY, HHSHRGY and FHEKHHSHRGY peptides. In Candida albicans (strain SC5314 / ATCC MYA-2876) (Yeast), this protein is Secreted aspartic protease 8.